The chain runs to 217 residues: Peptide methionine sulfoxide reductase MsrA (217 aa).

Cys56 is a catalytic residue.

The protein belongs to the MsrA Met sulfoxide reductase family.

It catalyses the reaction L-methionyl-[protein] + [thioredoxin]-disulfide + H2O = L-methionyl-(S)-S-oxide-[protein] + [thioredoxin]-dithiol. The catalysed reaction is [thioredoxin]-disulfide + L-methionine + H2O = L-methionine (S)-S-oxide + [thioredoxin]-dithiol. In terms of biological role, has an important function as a repair enzyme for proteins that have been inactivated by oxidation. Catalyzes the reversible oxidation-reduction of methionine sulfoxide in proteins to methionine. In Rippkaea orientalis (strain PCC 8801 / RF-1) (Cyanothece sp. (strain PCC 8801)), this protein is Peptide methionine sulfoxide reductase MsrA.